The following is a 525-amino-acid chain: Ent-kaurene oxidase (525 aa).

A helical transmembrane segment spans residues 31–51 (VHWLIYVAFGAWLCSYVIHVL). Residue C466 participates in heme binding.

The protein belongs to the cytochrome P450 family. The cofactor is heme.

Its subcellular location is the membrane. It catalyses the reaction ent-kaur-16-ene + 3 reduced [NADPH--hemoprotein reductase] + 3 O2 = ent-kaur-16-en-19-oate + 3 oxidized [NADPH--hemoprotein reductase] + 4 H2O + 4 H(+). The protein operates within plant hormone biosynthesis; gibberellin biosynthesis. Catalyzes three successive oxidations of the 4-methyl group of ent-kaurene giving kaurenoic acid, a key step in gibberellin (GA) biosynthesis. The polypeptide is Ent-kaurene oxidase (CYP503A1) (Fusarium fujikuroi (Bakanae and foot rot disease fungus)).